The chain runs to 133 residues: Snaclec echicetin subunit alpha (133 aa).

Cystine bridges form between cysteine 4–cysteine 15, cysteine 31–cysteine 127, and cysteine 102–cysteine 119. One can recognise a C-type lectin domain in the interval 11-128; sequence YEGHCYQLFR…CEFKFPFVCK (118 aa).

It belongs to the snaclec family. As to quaternary structure, heterodimer of subunits alpha and beta; disulfide-linked. Forms an active complex with the pentameric immunoglobuline Mkappa (IgMkappa). Expressed by the venom gland.

It is found in the secreted. Echicetin itself inhibits aggregation of washed platelets induced by vWF, thrombin or alboaggregin-A. However, when complexed with the pentameric plasma immunoglobulin Mkappa (IgMkappa), echicetin binds specifically to GPIb and activates platelets. This is caused by P-selectin expression and activation of alpha-IIb/beta-3 as well as tyrosine phosphorylation of several signal transduction molecules, including p53/56(LYN), p64, p72(SYK), p70 to p90, and p120. In vivo, it induces thrombocytopenia when injected into mice, probably accounting of activation of platelets rather than inhibition. The protein is Snaclec echicetin subunit alpha of Echis carinatus sochureki (Saw-scaled viper).